Reading from the N-terminus, the 254-residue chain is Uridylate kinase (254 aa).

9 to 12 (KLSG) lines the ATP pocket. Glycine 51 is a binding site for UMP. Residues glycine 52 and arginine 56 each coordinate ATP. Residues aspartate 72 and 133 to 140 (SGNPFFTT) contribute to the UMP site. Positions 160, 166, and 169 each coordinate ATP.

The protein belongs to the UMP kinase family. In terms of assembly, homohexamer.

It is found in the cytoplasm. The catalysed reaction is UMP + ATP = UDP + ADP. Its pathway is pyrimidine metabolism; CTP biosynthesis via de novo pathway; UDP from UMP (UMPK route): step 1/1. With respect to regulation, inhibited by UTP. Catalyzes the reversible phosphorylation of UMP to UDP. The sequence is that of Uridylate kinase from Synechococcus sp. (strain JA-3-3Ab) (Cyanobacteria bacterium Yellowstone A-Prime).